A 434-amino-acid chain; its full sequence is Enolase (434 aa).

Residues H158 and E167 each coordinate substrate. E210 functions as the Proton donor in the catalytic mechanism. Mg(2+) is bound by residues D245, E294, and D319. Substrate-binding residues include E294 and D319. The Proton acceptor role is filled by K344. Substrate is bound by residues S371–S374 and K395.

This sequence belongs to the enolase family. As to quaternary structure, homodimer. Mg(2+) serves as cofactor.

The protein resides in the cytoplasm. It catalyses the reaction (2R)-2-phosphoglycerate = phosphoenolpyruvate + H2O. It participates in carbohydrate degradation; glycolysis; pyruvate from D-glyceraldehyde 3-phosphate: step 4/5. This Caenorhabditis elegans protein is Enolase.